We begin with the raw amino-acid sequence, 807 residues long: Putative AC transposase (807 aa).

Disordered regions lie at residues 42–140 (GLKR…KKCT) and 785–807 (MDED…GSSP). Positions 84–98 (QSVSSSNANGTATDP) are enriched in polar residues. Tandem repeats lie at residues 109–110 (PQ), 111–112 (PQ), 113–114 (PQ), 115–116 (PQ), 117–118 (PE), 119–120 (PQ), 121–122 (PQ), 123–124 (PQ), 125–126 (PE), and 127–128 (PE). Positions 109–128 (PQPQPQPQPEPQPQPQPEPE) are 10 X 2 AA tandem repeats of P-[QE]. Positions 110–125 (QPQPQPQPEPQPQPQP) are enriched in pro residues.

The sequence is that of Putative AC transposase from Zea mays (Maize).